Consider the following 346-residue polypeptide: Ribosomal RNA small subunit methyltransferase H (346 aa).

Residues 46–48, D63, F90, D113, and Q120 each bind S-adenosyl-L-methionine; that span reads GGY. The segment at 270-346 is disordered; that stretch reads GGSAGSRHMP…LPETNELARS (77 aa).

The protein belongs to the methyltransferase superfamily. RsmH family.

Its subcellular location is the cytoplasm. The enzyme catalyses cytidine(1402) in 16S rRNA + S-adenosyl-L-methionine = N(4)-methylcytidine(1402) in 16S rRNA + S-adenosyl-L-homocysteine + H(+). Functionally, specifically methylates the N4 position of cytidine in position 1402 (C1402) of 16S rRNA. The chain is Ribosomal RNA small subunit methyltransferase H from Brucella abortus (strain S19).